The chain runs to 33 residues: Dermonecrotic toxin LbSicTox-alphaIB1b (33 aa).

Histidine 11 is a catalytic residue. Residues glutamate 31 and aspartate 33 each coordinate Mg(2+).

It belongs to the arthropod phospholipase D family. Class II subfamily. It depends on Mg(2+) as a cofactor. Contains 2 disulfide bonds. In terms of tissue distribution, expressed by the venom gland.

The protein localises to the secreted. It catalyses the reaction an N-(acyl)-sphingosylphosphocholine = an N-(acyl)-sphingosyl-1,3-cyclic phosphate + choline. The catalysed reaction is an N-(acyl)-sphingosylphosphoethanolamine = an N-(acyl)-sphingosyl-1,3-cyclic phosphate + ethanolamine. The enzyme catalyses a 1-acyl-sn-glycero-3-phosphocholine = a 1-acyl-sn-glycero-2,3-cyclic phosphate + choline. It carries out the reaction a 1-acyl-sn-glycero-3-phosphoethanolamine = a 1-acyl-sn-glycero-2,3-cyclic phosphate + ethanolamine. Functionally, dermonecrotic toxins cleave the phosphodiester linkage between the phosphate and headgroup of certain phospholipids (sphingolipid and lysolipid substrates), forming an alcohol (often choline) and a cyclic phosphate. This toxin acts on sphingomyelin (SM) with high activity (9.5 U/mg). It may also act on ceramide phosphoethanolamine (CPE), lysophosphatidylcholine (LPC) and lysophosphatidylethanolamine (LPE), but not on lysophosphatidylserine (LPS), and lysophosphatidylglycerol (LPG). It acts by transphosphatidylation, releasing exclusively cyclic phosphate products as second products. Induces dermonecrosis, hemolysis, increased vascular permeability, edema, inflammatory response, and platelet aggregation. The sequence is that of Dermonecrotic toxin LbSicTox-alphaIB1b from Loxosceles boneti (North American fiddleback spider).